A 263-amino-acid chain; its full sequence is Small ribosomal subunit protein eS4, Y isoform 1 (263 aa).

One can recognise an S4 RNA-binding domain in the interval 42–104 (LPLIIFLRNR…TGEHFRLVYD (63 aa)).

This sequence belongs to the eukaryotic ribosomal protein eS4 family.

The sequence is that of Small ribosomal subunit protein eS4, Y isoform 1 (RPS4Y1) from Monodelphis domestica (Gray short-tailed opossum).